Reading from the N-terminus, the 133-residue chain is Small ribosomal subunit protein uS8 (133 aa).

It belongs to the universal ribosomal protein uS8 family. In terms of assembly, part of the 30S ribosomal subunit. Contacts proteins S5 and S12.

Functionally, one of the primary rRNA binding proteins, it binds directly to 16S rRNA central domain where it helps coordinate assembly of the platform of the 30S subunit. The polypeptide is Small ribosomal subunit protein uS8 (Oenococcus oeni (strain ATCC BAA-331 / PSU-1)).